The chain runs to 1033 residues: Phospholipid-transporting ATPase neo1 (1033 aa).

The next 4 membrane-spanning stretches (helical) occupy residues 133–153 (LKIG…LITL), 274–294 (TLWA…VYTG), 317–337 (INFY…GLTF), and 344–364 (DWYI…PINL). Residue Asp-408 is the 4-aspartylphosphate intermediate of the active site. Asp-408, Lys-409, Thr-410, Glu-491, Phe-528, Ser-530, Lys-533, Lys-551, Arg-580, Thr-581, Thr-662, Gly-663, Asp-664, Arg-744, and Lys-750 together coordinate ATP. Asp-408 provides a ligand contact to Mg(2+). Residue Thr-410 coordinates Mg(2+). The next 6 helical transmembrane spans lie at 768–788 (IGDG…IGIV), 843–863 (VVYS…LLLV), 913–933 (VLIS…LIGF), 939–959 (MLAV…ALQI), 965–985 (TIVM…PFLT), and 992–1012 (FLLG…SLLP). Asp-770 contacts Mg(2+). ATP-binding residues include Asn-773 and Asp-774. A Mg(2+)-binding site is contributed by Asp-774.

The protein belongs to the cation transport ATPase (P-type) (TC 3.A.3) family. Type IV subfamily. As to quaternary structure, functions without a CDC50/LEM3 family accessory subunit. It depends on Mg(2+) as a cofactor.

The protein localises to the endosome membrane. Its subcellular location is the golgi apparatus membrane. It catalyses the reaction ATP + H2O + phospholipidSide 1 = ADP + phosphate + phospholipidSide 2.. The catalysed reaction is a 1,2-diacyl-sn-glycero-3-phospho-L-serine(out) + ATP + H2O = a 1,2-diacyl-sn-glycero-3-phospho-L-serine(in) + ADP + phosphate + H(+). The enzyme catalyses a 1,2-diacyl-sn-glycero-3-phosphoethanolamine(out) + ATP + H2O = a 1,2-diacyl-sn-glycero-3-phosphoethanolamine(in) + ADP + phosphate + H(+). Flippase that catalyzes the hydrolysis of ATP coupled to the transport of lysophosphatidylserine, phosphatidylethanolamine, and phosphatidylserine from the lumenal to the cytosolic leaflet of the Golgi apparatus membrane and ensures the maintenance of asymmetric distribution of phospholipids. This Schizosaccharomyces pombe (strain 972 / ATCC 24843) (Fission yeast) protein is Phospholipid-transporting ATPase neo1.